A 239-amino-acid polypeptide reads, in one-letter code: Ribosomal RNA small subunit methyltransferase A (239 aa).

S-adenosyl-L-methionine contacts are provided by Asn23, Ile25, Gly50, Glu72, Asp97, and Asn116.

The protein belongs to the class I-like SAM-binding methyltransferase superfamily. rRNA adenine N(6)-methyltransferase family. RsmA subfamily.

The protein resides in the cytoplasm. The enzyme catalyses adenosine(1518)/adenosine(1519) in 16S rRNA + 4 S-adenosyl-L-methionine = N(6)-dimethyladenosine(1518)/N(6)-dimethyladenosine(1519) in 16S rRNA + 4 S-adenosyl-L-homocysteine + 4 H(+). Functionally, specifically dimethylates two adjacent adenosines (A1518 and A1519) in the loop of a conserved hairpin near the 3'-end of 16S rRNA in the 30S particle. May play a critical role in biogenesis of 30S subunits. The chain is Ribosomal RNA small subunit methyltransferase A from Rickettsia felis (strain ATCC VR-1525 / URRWXCal2) (Rickettsia azadi).